Consider the following 437-residue polypeptide: Enolase (437 aa).

Gln-166 lines the (2R)-2-phosphoglycerate pocket. Residue Glu-208 is the Proton donor of the active site. Residues Asp-245, Glu-295, and Asp-322 each coordinate Mg(2+). Positions 347, 376, 377, and 398 each coordinate (2R)-2-phosphoglycerate. Lys-347 acts as the Proton acceptor in catalysis.

The protein belongs to the enolase family. Mg(2+) is required as a cofactor.

It is found in the cytoplasm. Its subcellular location is the secreted. The protein localises to the cell surface. It catalyses the reaction (2R)-2-phosphoglycerate = phosphoenolpyruvate + H2O. It functions in the pathway carbohydrate degradation; glycolysis; pyruvate from D-glyceraldehyde 3-phosphate: step 4/5. Its function is as follows. Catalyzes the reversible conversion of 2-phosphoglycerate (2-PG) into phosphoenolpyruvate (PEP). It is essential for the degradation of carbohydrates via glycolysis. This is Enolase from Lachnoclostridium phytofermentans (strain ATCC 700394 / DSM 18823 / ISDg) (Clostridium phytofermentans).